The primary structure comprises 140 residues: Putative pre-16S rRNA nuclease (140 aa).

Belongs to the YqgF nuclease family.

It localises to the cytoplasm. Its function is as follows. Could be a nuclease involved in processing of the 5'-end of pre-16S rRNA. The chain is Putative pre-16S rRNA nuclease from Halalkalibacterium halodurans (strain ATCC BAA-125 / DSM 18197 / FERM 7344 / JCM 9153 / C-125) (Bacillus halodurans).